A 299-amino-acid chain; its full sequence is Acetyl-coenzyme A carboxylase carboxyl transferase subunit beta (299 aa).

One can recognise a CoA carboxyltransferase N-terminal domain in the interval 25 to 294 (VWTKCTSCEQ…PFVEPELIQE (270 aa)). Zn(2+) is bound by residues cysteine 29, cysteine 32, cysteine 48, and cysteine 51. The C4-type zinc-finger motif lies at 29 to 51 (CTSCEQVLYRDELKRHLEVCPKC).

Belongs to the AccD/PCCB family. As to quaternary structure, acetyl-CoA carboxylase is a heterohexamer composed of biotin carboxyl carrier protein (AccB), biotin carboxylase (AccC) and two subunits each of ACCase subunit alpha (AccA) and ACCase subunit beta (AccD). Requires Zn(2+) as cofactor.

It is found in the cytoplasm. The enzyme catalyses N(6)-carboxybiotinyl-L-lysyl-[protein] + acetyl-CoA = N(6)-biotinyl-L-lysyl-[protein] + malonyl-CoA. It participates in lipid metabolism; malonyl-CoA biosynthesis; malonyl-CoA from acetyl-CoA: step 1/1. In terms of biological role, component of the acetyl coenzyme A carboxylase (ACC) complex. Biotin carboxylase (BC) catalyzes the carboxylation of biotin on its carrier protein (BCCP) and then the CO(2) group is transferred by the transcarboxylase to acetyl-CoA to form malonyl-CoA. This is Acetyl-coenzyme A carboxylase carboxyl transferase subunit beta from Histophilus somni (strain 129Pt) (Haemophilus somnus).